A 96-amino-acid polypeptide reads, in one-letter code: Uteroglobin (96 aa).

The N-terminal stretch at 1–19 is a signal peptide; sequence MKIAITITVLMLSICCSSA.

Belongs to the secretoglobin family. In terms of assembly, antiparallel homodimer; disulfide-linked. Interaction with LMBR1L is controversial. Club cells (nonciliated cells of the surface epithelium of the pulmonary airways).

The protein resides in the secreted. In terms of biological role, binds phosphatidylcholine, phosphatidylinositol, polychlorinated biphenyls (PCB) and weakly progesterone, potent inhibitor of phospholipase A2. The protein is Uteroglobin (Scgb1a1) of Rattus norvegicus (Rat).